We begin with the raw amino-acid sequence, 113 residues long: Antimicrobial peptide microplusin (113 aa).

An N-terminal signal peptide occupies residues 1–19; the sequence is MKSLLVLALLAFGAVLVSA. Cystine bridges form between Cys-25/Cys-71, Cys-38/Cys-99, and Cys-60/Cys-65.

It is found in the secreted. Its function is as follows. Has bacteriostatic activity against Gram-positive bacteria, but not against Gram-negative bacteria. Has fungistatic activity against some but not all fungi. Binds and sequesters copper and iron ions. Copper-chelating activity is crucial for antimicrobial activity against M.luteus. The protein is Antimicrobial peptide microplusin of Argas monolakensis (Mono lake bird tick).